The primary structure comprises 389 residues: Large envelope protein (389 aa).

The residue at position 1 (methionine 1) is an N-acetylmethionine. A lipid anchor (N-myristoyl glycine; by host) is attached at glycine 2. The tract at residues 2-108 is pre-S1; it reads GQNLSVTNPL…PPLRDTHPQA (107 aa). Residues 2 to 163 are pre-S; sequence GQNLSVTNPL…FLKTGDPALN (162 aa). The Virion surface; in external conformation portion of the chain corresponds to 2–170; sequence GQNLSVTNPL…ALNMESISSG (169 aa). The Intravirion; in internal conformation portion of the chain corresponds to 2–242; that stretch reads GQNLSVTNPL…PGYRWMCLRR (241 aa). The interval 78-105 is disordered; it reads PAVPPPASTNRQSGRRPTPISPPLRDTH. Positions 109 to 163 are pre-S2; the sequence is MQWNSTVFHQALQDPRVRGLYFPAGGSSSGTVSPVPTTASPISSTFLKTGDPALN. The helical transmembrane segment at 171–191 threads the bilayer; the sequence is FLGPLLVLQAGFFLLTKILTI. The Intravirion; in external conformation segment spans residues 192 to 242; sequence PQSLDSWWTSLNFLGGAPVCPGQNSQSLTSNHSPTSCPPICPGYRWMCLRR. The chain crosses the membrane as a helical span at residues 243–263; the sequence is FIIFLFILLLCLIFLLVLLDY. Topologically, residues 264 to 337 are virion surface; it reads RGMLPVCPLL…WASVRFSWLN (74 aa). Asparagine 309 carries N-linked (GlcNAc...) asparagine; by host glycosylation. Residues 338–358 form a helical membrane-spanning segment; it reads LLVPFVQWFAGLSPTVWLSVI. The Intravirion portion of the chain corresponds to 359–364; sequence WMIWYW. A helical membrane pass occupies residues 365 to 387; the sequence is GPSLYNILSPFIPLLPIFFCLWA. At 388–389 the chain is on the virion surface side; the sequence is YI.

It belongs to the orthohepadnavirus major surface antigen family. In terms of assembly, in its internal form (Li-HBsAg), interacts with the capsid protein and with the isoform S. Interacts with host chaperone CANX. As to quaternary structure, associates with host chaperone CANX through its pre-S2 N glycan; this association may be essential for isoform M proper secretion. Interacts with isoform L. Interacts with the antigens of satellite virus HDV (HDVAgs); this interaction is required for encapsidation of HDV genomic RNA. Post-translationally, isoform M is N-terminally acetylated by host at a ratio of 90%, and N-glycosylated by host at the pre-S2 region. Myristoylated.

The protein resides in the virion membrane. Its function is as follows. The large envelope protein exists in two topological conformations, one which is termed 'external' or Le-HBsAg and the other 'internal' or Li-HBsAg. In its external conformation the protein attaches the virus to cell receptors and thereby initiating infection. This interaction determines the species specificity and liver tropism. This attachment induces virion internalization predominantly through caveolin-mediated endocytosis. The large envelope protein also assures fusion between virion membrane and endosomal membrane. In its internal conformation the protein plays a role in virion morphogenesis and mediates the contact with the nucleocapsid like a matrix protein. In terms of biological role, the middle envelope protein plays an important role in the budding of the virion. It is involved in the induction of budding in a nucleocapsid independent way. In this process the majority of envelope proteins bud to form subviral lipoprotein particles of 22 nm of diameter that do not contain a nucleocapsid. The chain is Large envelope protein from Pongo pygmaeus (Bornean orangutan).